We begin with the raw amino-acid sequence, 304 residues long: Ribonuclease Z (304 aa).

Zn(2+) contacts are provided by histidine 64, histidine 66, aspartate 68, histidine 69, histidine 141, aspartate 209, and histidine 267. Aspartate 68 functions as the Proton acceptor in the catalytic mechanism.

It belongs to the RNase Z family. In terms of assembly, homodimer. The cofactor is Zn(2+).

It catalyses the reaction Endonucleolytic cleavage of RNA, removing extra 3' nucleotides from tRNA precursor, generating 3' termini of tRNAs. A 3'-hydroxy group is left at the tRNA terminus and a 5'-phosphoryl group is left at the trailer molecule.. Functionally, zinc phosphodiesterase, which displays some tRNA 3'-processing endonuclease activity. Probably involved in tRNA maturation, by removing a 3'-trailer from precursor tRNA. This Thermoplasma volcanium (strain ATCC 51530 / DSM 4299 / JCM 9571 / NBRC 15438 / GSS1) protein is Ribonuclease Z.